The following is a 542-amino-acid chain: Importin subunit alpha (542 aa).

Methionine 1 carries the post-translational modification N-acetylmethionine. Residues 1-11 (MDNGTDSSTSK) show a composition bias toward polar residues. The IBB domain occupies 1–65 (MDNGTDSSTS…RNFIPPTDGA (65 aa)). Residues 1 to 77 (MDNGTDSSTS…DEEDESSVSA (77 aa)) are disordered. The segment covering 27-53 (FSADELRRRRDTQQVELRKAKRDEALA) has biased composition (basic and acidic residues). Residues 89 to 122 (LPQMTQQLNSDDMQEQLSATVKFRQILSREHRPP) form an ARM 1; truncated repeat. ARM repeat units lie at residues 123 to 162 (IDVVIQAGVVPRLVEFMRENQPEMLQLEAAWALTNIASGT), 163 to 204 (SAQT…AGDS), 205 to 251 (TDYR…PQPD), 252 to 288 (WSVVSQALPTLAKLIYSMDTETLVDACWAISYLSDGP), 289 to 330 (QEAI…VTGN), 331 to 372 (DLQT…TAGN), 373 to 417 (TEQI…GLQR), and 418 to 471 (PDII…LNIN). Residues 209–335 (DYVLQCNAME…IVTGNDLQTQ (127 aa)) are NLS binding site 1. An NLS binding site 2 region spans residues 419–505 (DIIRYLVSQG…KIYEKAYKII (87 aa)). Residues 472–508 (ENADFIEKAGGMEKIFNCQQNENDKIYEKAYKIIETY) form an ARM 10; atypical repeat.

Belongs to the importin alpha family. Forms a complex with an importin beta subunit. In the nucleus, interacts with NUP2 which accelerate release of NLSs, NUP2 is subsequently displaced by CSE1:RanGTP which mediates re-export and recycling. Interacts with HEH2, SHE2, and STS1.

It localises to the cytoplasm. The protein resides in the perinuclear region. In terms of biological role, functions in nuclear protein import as an adapter protein for importin beta nuclear receptors. Binds specifically and directly to substrates containing either a simple or bipartite NLS motif. Promotes docking of import substrates to the nuclear envelope. Together with importin beta KAP95, mediates nuclear import of transcription factor GCN4. Together with tethering factor STS1, targets the proteasome to the nucleus. This is Importin subunit alpha (SRP1) from Saccharomyces cerevisiae (strain ATCC 204508 / S288c) (Baker's yeast).